Consider the following 189-residue polypeptide: MKELKILVVNNYGQFCHLIHRAVRDLDMDTKIIPNTTPIEDILAEEPDGLILSGGPEMDRAGLCFDYVREIDLPILGICLGHQAIALAYGGHVHSGKKGGYAEVEVEVLEEDDILRGLGPKATVWASHADEVAILPEGFIHLARSDICEIEAMRHPTKPIYGVQWHPEVSHTEKGEELLTNFLEICEKY.

Residues 5 to 189 (KILVVNNYGQ…TNFLEICEKY (185 aa)) enclose the Glutamine amidotransferase type-1 domain. Cysteine 79 (nucleophile) is an active-site residue. Active-site residues include histidine 166 and glutamate 168.

As to quaternary structure, heterodimer composed of a glutamine amidotransferase subunit (A) and a GMP-binding subunit (B).

The enzyme catalyses XMP + L-glutamine + ATP + H2O = GMP + L-glutamate + AMP + diphosphate + 2 H(+). It functions in the pathway purine metabolism; GMP biosynthesis; GMP from XMP (L-Gln route): step 1/1. In terms of biological role, catalyzes the synthesis of GMP from XMP. This chain is GMP synthase [glutamine-hydrolyzing] subunit A, found in Methanosarcina barkeri (strain Fusaro / DSM 804).